A 232-amino-acid chain; its full sequence is H-2 class II histocompatibility antigen, E-S beta chain (232 aa).

The interval tryptophan 1–valine 90 is beta-1. Residues tryptophan 1–lysine 193 lie on the Extracellular side of the membrane. Intrachain disulfides connect cysteine 10-cysteine 74 and cysteine 112-cysteine 168. The N-linked (GlcNAc...) asparagine glycan is linked to asparagine 14. The segment at glutamate 91–lysine 193 is beta-2. Residues proline 92–glutamate 182 enclose the Ig-like C1-type domain. Residues methionine 194–phenylalanine 216 form a helical membrane-spanning segment. Residues arginine 217–serine 232 are Cytoplasmic-facing.

The protein belongs to the MHC class II family. In terms of processing, ubiquitinated in immature dendritic cells leading to down-regulation of MHC class II.

The protein resides in the membrane. This chain is H-2 class II histocompatibility antigen, E-S beta chain (H2-Eb1), found in Mus musculus (Mouse).